The sequence spans 214 residues: Refilin-B (214 aa).

The tract at residues Met-1–Gly-56 is disordered. Phosphoserine is present on residues Ser-6 and Ser-26.

This sequence belongs to the Refilin family. As to quaternary structure, interacts with FLNA and FLNB.

Its subcellular location is the cytoplasm. The protein localises to the cytoskeleton. Involved in the regulation of the perinuclear actin network and nuclear shape through interaction with filamins. Plays an essential role in the formation of cartilaginous skeletal elements. This is Refilin-B from Homo sapiens (Human).